Consider the following 353-residue polypeptide: Probable transport protein YPL264C (353 aa).

Over 1-16 the chain is Cytoplasmic; the sequence is MTLQRISKDYLKPNYG. Residues 17-37 traverse the membrane as a helical segment; that stretch reads LILLIVSYFFNSSMVVSTKVL. Positions 24–160 constitute an EamA 1 domain; sequence YFFNSSMVVS…SFSGVVLIIR (137 aa). At 38–51 the chain is on the extracellular side; the sequence is ENDPLETSQSRINP. A helical membrane pass occupies residues 52-69; that stretch reads LQILLVRMSITYCCTLVY. Residues 70-94 are Cytoplasmic-facing; that stretch reads MHWNKQSVPDIPWGPAPCRKWLILR. A helical transmembrane segment spans residues 95–115; that stretch reads GIMGFFGVFGMYFSLMYLSIS. A topological domain (extracellular) is located at residue Asp-116. Residues 117–137 traverse the membrane as a helical segment; that stretch reads AVLITFMSPTLTIFLSFLLLG. The Cytoplasmic portion of the chain corresponds to 138–144; the sequence is EPFSKLE. A helical membrane pass occupies residues 145-165; it reads ALGSLISFSGVVLIIRPTFLF. At 166-188 the chain is on the extracellular side; the sequence is GEQTQGQQSPQDDIVETQNPKLR. The chain crosses the membrane as a helical span at residues 189 to 209; that stretch reads LIAIGVSLLGVCGLSSVYIII. The EamA 2 domain maps to 200 to 326; sequence CGLSSVYIII…IVSSTIWVIN (127 aa). At 210–218 the chain is on the cytoplasmic side; it reads RYIGNKAHA. Residues 219-239 traverse the membrane as a helical segment; that stretch reads IMSVSYFSLVTTVVAALGVLL. The Extracellular portion of the chain corresponds to 240–254; that stretch reads IPSMSLQLPHSWKQW. Residues 255-275 form a helical membrane-spanning segment; sequence GLFLNLGISGFIHQILLTMGI. The Cytoplasmic segment spans residues 276-282; that stretch reads QRERAGR. A helical transmembrane segment spans residues 283 to 303; that stretch reads GSLMTYTQVIYAVFWDVVLFH. Position 304 (His-304) is a topological domain, extracellular. Residues 305–325 traverse the membrane as a helical segment; the sequence is WPNIWTWCGMAVIVSSTIWVI. Topologically, residues 326 to 353 are cytoplasmic; the sequence is NMRASKQNVVATAELLSTSDFELDDLED.

The protein resides in the membrane. The polypeptide is Probable transport protein YPL264C (Saccharomyces cerevisiae (strain ATCC 204508 / S288c) (Baker's yeast)).